The sequence spans 416 residues: D-amino acid dehydrogenase (416 aa).

Residue 3–17 participates in FAD binding; it reads VIVLGAGIVGVTSAY.

Belongs to the DadA oxidoreductase family. FAD is required as a cofactor.

It carries out the reaction a D-alpha-amino acid + A + H2O = a 2-oxocarboxylate + AH2 + NH4(+). The protein operates within amino-acid degradation; D-alanine degradation; NH(3) and pyruvate from D-alanine: step 1/1. Oxidative deamination of D-amino acids. This is D-amino acid dehydrogenase from Rhizobium johnstonii (strain DSM 114642 / LMG 32736 / 3841) (Rhizobium leguminosarum bv. viciae).